A 307-amino-acid polypeptide reads, in one-letter code: Isethionate sulfite-lyase activating enzyme (307 aa).

The Radical SAM core domain maps to 22–307; it reads HDGPGIRTVV…EAVVAQTADS (286 aa). 11 residues coordinate [4Fe-4S] cluster: Cys-36, Cys-40, Cys-43, Cys-62, Cys-68, Cys-71, Cys-75, Cys-95, Cys-98, Cys-102, and Cys-106. 42-44 lines the S-adenosyl-L-methionine pocket; sequence WCS. 4Fe-4S ferredoxin-type domains follow at residues 53-85 and 86-117; these read VELA…RAED and DTIS…YGAH. Residues Gly-146, 195-197, and His-268 each bind S-adenosyl-L-methionine; that span reads DIK.

This sequence belongs to the organic radical-activating enzymes family. In terms of assembly, monomer. It depends on [4Fe-4S] cluster as a cofactor.

The enzyme catalyses glycyl-[protein] + reduced [flavodoxin] + S-adenosyl-L-methionine = glycin-2-yl radical-[protein] + semiquinone [flavodoxin] + 5'-deoxyadenosine + L-methionine + H(+). The protein operates within organosulfur degradation; alkanesulfonate degradation. Functionally, involved in an anaerobic respiration pathway that converts the sulfonate isethionate (2-hydroxyethanesulfonate) to ammonia, acetate and sulfide. Catalyzes activation of the isethionate sulfite-lyase IseG under anaerobic conditions by generation of an organic free radical on a glycine residue, via a homolytic cleavage of S-adenosyl-L-methionine (SAM). In Nitratidesulfovibrio vulgaris (strain ATCC 29579 / DSM 644 / CCUG 34227 / NCIMB 8303 / VKM B-1760 / Hildenborough) (Desulfovibrio vulgaris), this protein is Isethionate sulfite-lyase activating enzyme.